The primary structure comprises 464 residues: tRNA modification GTPase MnmE (464 aa).

(6S)-5-formyl-5,6,7,8-tetrahydrofolate-binding residues include Arg-25, Glu-87, and Lys-130. Positions 226–386 constitute a TrmE-type G domain; it reads GLSVVLAGQP…LRAELLRIAG (161 aa). Residue Asn-236 participates in K(+) binding. Residues 236–241, 255–261, and 280–283 contribute to the GTP site; these read NVGKSS, TPIAGTT, and DTAG. Residue Ser-240 participates in Mg(2+) binding. 3 residues coordinate K(+): Thr-255, Ile-257, and Thr-260. A Mg(2+)-binding site is contributed by Thr-261. Lys-464 provides a ligand contact to (6S)-5-formyl-5,6,7,8-tetrahydrofolate.

Belongs to the TRAFAC class TrmE-Era-EngA-EngB-Septin-like GTPase superfamily. TrmE GTPase family. In terms of assembly, homodimer. Heterotetramer of two MnmE and two MnmG subunits. K(+) serves as cofactor.

The protein resides in the cytoplasm. Its function is as follows. Exhibits a very high intrinsic GTPase hydrolysis rate. Involved in the addition of a carboxymethylaminomethyl (cmnm) group at the wobble position (U34) of certain tRNAs, forming tRNA-cmnm(5)s(2)U34. The chain is tRNA modification GTPase MnmE from Burkholderia orbicola (strain AU 1054).